The primary structure comprises 340 residues: UDP-3-O-acylglucosamine N-acyltransferase (340 aa).

His-238 acts as the Proton acceptor in catalysis.

Belongs to the transferase hexapeptide repeat family. LpxD subfamily. Homotrimer.

The catalysed reaction is a UDP-3-O-[(3R)-3-hydroxyacyl]-alpha-D-glucosamine + a (3R)-hydroxyacyl-[ACP] = a UDP-2-N,3-O-bis[(3R)-3-hydroxyacyl]-alpha-D-glucosamine + holo-[ACP] + H(+). It functions in the pathway bacterial outer membrane biogenesis; LPS lipid A biosynthesis. Its function is as follows. Catalyzes the N-acylation of UDP-3-O-acylglucosamine using 3-hydroxyacyl-ACP as the acyl donor. Is involved in the biosynthesis of lipid A, a phosphorylated glycolipid that anchors the lipopolysaccharide to the outer membrane of the cell. The protein is UDP-3-O-acylglucosamine N-acyltransferase of Shewanella frigidimarina (strain NCIMB 400).